Consider the following 71-residue polypeptide: Small ribosomal subunit protein bS21 (71 aa).

The protein belongs to the bacterial ribosomal protein bS21 family.

This Buchnera aphidicola subsp. Cinara cedri (strain Cc) protein is Small ribosomal subunit protein bS21.